The chain runs to 340 residues: GTPase Obg (340 aa).

One can recognise an Obg domain in the interval 1–159 (MGFIDEVKLC…KHVLLKLKVL (159 aa)). Residues 160–329 (SDVGIIGMPN…LSEKLKKSNS (170 aa)) form the OBG-type G domain. Residues 166 to 173 (GMPNAGKS), 191 to 195 (FTTVR), 212 to 215 (DIPG), 279 to 282 (NKCD), and 310 to 312 (NGD) each bind GTP. 2 residues coordinate Mg(2+): S173 and T193.

This sequence belongs to the TRAFAC class OBG-HflX-like GTPase superfamily. OBG GTPase family. As to quaternary structure, monomer. It depends on Mg(2+) as a cofactor.

It is found in the cytoplasm. Its function is as follows. An essential GTPase which binds GTP, GDP and possibly (p)ppGpp with moderate affinity, with high nucleotide exchange rates and a fairly low GTP hydrolysis rate. Plays a role in control of the cell cycle, stress response, ribosome biogenesis and in those bacteria that undergo differentiation, in morphogenesis control. This Wolbachia pipientis wMel protein is GTPase Obg.